The sequence spans 258 residues: Hydroxyethylthiazole kinase (258 aa).

M37 contributes to the substrate binding site. Residues R112 and T158 each contribute to the ATP site. A185 lines the substrate pocket.

It belongs to the Thz kinase family. Requires Mg(2+) as cofactor.

The catalysed reaction is 5-(2-hydroxyethyl)-4-methylthiazole + ATP = 4-methyl-5-(2-phosphooxyethyl)-thiazole + ADP + H(+). Its pathway is cofactor biosynthesis; thiamine diphosphate biosynthesis; 4-methyl-5-(2-phosphoethyl)-thiazole from 5-(2-hydroxyethyl)-4-methylthiazole: step 1/1. Functionally, catalyzes the phosphorylation of the hydroxyl group of 4-methyl-5-beta-hydroxyethylthiazole (THZ). This chain is Hydroxyethylthiazole kinase, found in Rhizobium etli (strain ATCC 51251 / DSM 11541 / JCM 21823 / NBRC 15573 / CFN 42).